Reading from the N-terminus, the 65-residue chain is Putative antitoxin PF2058 (65 aa).

The protein belongs to the UPF0165 family.

Possibly the antitoxin component of a type II toxin-antitoxin (TA) system. This Pyrococcus furiosus (strain ATCC 43587 / DSM 3638 / JCM 8422 / Vc1) protein is Putative antitoxin PF2058.